Reading from the N-terminus, the 163-residue chain is Nucleotide-binding protein GTNG_0630 (163 aa).

The protein belongs to the YajQ family.

Nucleotide-binding protein. In Geobacillus thermodenitrificans (strain NG80-2), this protein is Nucleotide-binding protein GTNG_0630.